A 367-amino-acid chain; its full sequence is Folliculin-like protein bhd1 (367 aa).

Disordered regions lie at residues 41–75 and 92–115; these read RSIG…QSST and SKGP…SPIS. Basic and acidic residues predominate over residues 54–64; it reads EAFKNELDNRN. Composition is skewed to polar residues over residues 65-75 and 99-115; these read NADSQSLQSST and RVNS…SPIS. In terms of domain architecture, uDENN FLCN/SMCR8-type spans 131–302; that stretch reads FSVPDVQPRL…SNIGTAPSYE (172 aa).

It belongs to the folliculin family.

It localises to the nucleus. It is found in the cytoplasm. The sequence is that of Folliculin-like protein bhd1 (bhd1) from Schizosaccharomyces pombe (strain 972 / ATCC 24843) (Fission yeast).